Reading from the N-terminus, the 194-residue chain is Thioredoxin peroxidase (194 aa).

Residues 2-160 (LQPNMPAPNF…ALRLLDAFIF (159 aa)) form the Thioredoxin domain. The Cysteine sulfenic acid (-SOH) intermediate role is filled by Cys-47.

The protein belongs to the peroxiredoxin family. AhpC/Prx1 subfamily. Homodimer; disulfide-linked, upon oxidation.

The catalysed reaction is a hydroperoxide + [thioredoxin]-dithiol = an alcohol + [thioredoxin]-disulfide + H2O. Functionally, antioxidant. Could be involved in protection against reactive oxygen species (ROS) generated by metabolic processes and/or protection of the parasite against ROS released by immune effector cells. Thiol-specific peroxidase that catalyzes the reduction of hydrogen peroxide and organic hydroperoxides to water and alcohols, respectively. Plays a role in cell protection against oxidative stress by detoxifying peroxides and as sensor of hydrogen peroxide-mediated signaling events. This chain is Thioredoxin peroxidase, found in Fasciola hepatica (Liver fluke).